The sequence spans 278 residues: Potassium/proton antiporter CemA (278 aa).

4 helical membrane-spanning segments follow: residues 60–80, 155–175, 201–221, and 239–259; these read YLLLLITVPLIVNQISKSFVF, AMKNLLADVLAFVTFVYLIVT, FLIILFTDIFVGFHSTHGWEV, and IFLFIATFPVVLDTVFKYWIF.

The protein belongs to the CemA family.

It is found in the plastid. The protein localises to the chloroplast inner membrane. The enzyme catalyses K(+)(in) + H(+)(out) = K(+)(out) + H(+)(in). Its function is as follows. Contributes to K(+)/H(+) antiport activity by supporting proton efflux to control proton extrusion and homeostasis in chloroplasts in a light-dependent manner to modulate photosynthesis. Prevents excessive induction of non-photochemical quenching (NPQ) under continuous-light conditions. Indirectly promotes efficient inorganic carbon uptake into chloroplasts. This chain is Potassium/proton antiporter CemA, found in Rhodomonas salina (Cryptomonas salina).